The primary structure comprises 612 residues: Coagulation factor X-activating enzyme heavy chain (612 aa).

The first 20 residues, 1 to 20 (MMQVLLVTISLAVFPYQGSS), serve as a signal peptide directing secretion. Positions 21–193 (IILESGNVND…KKASQLVATS (173 aa)) are cleaved as a propeptide — or 194. The Peptidase M12B domain maps to 201–395 (TFIELVIVVD…YKPKCILNPP (195 aa)). Residue E204 participates in Ca(2+) binding. The N-linked (GlcNAc...) asparagine glycan is linked to N259. A Ca(2+)-binding site is contributed by D286. Intrachain disulfides connect C310-C390, C350-C374, and C352-C357. Position 335 (H335) interacts with Zn(2+). E336 is an active-site residue. Residues H339 and H345 each coordinate Zn(2+). N-linked (GlcNAc...) asparagine glycosylation is found at N353 and N373. Positions 390, 393, 405, 408, 412, 415, and 418 each coordinate Ca(2+). Residues 403–489 (PPICGNEIWE…ECPADGFHAN (87 aa)) form the Disintegrin domain. C461 and C481 are disulfide-bonded. Positions 467-469 (ECD) match the D/ECD-tripeptide motif.

It belongs to the venom metalloproteinase (M12B) family. P-III subfamily. P-IIId sub-subfamily. Heterotrimer; disulfide-linked. The heterotrimer consists of 1 heavy chain and 2 light chains (lectins): LC1 and LC2 (AC Q7T045 and AC Q696W1). Zn(2+) is required as a cofactor. In terms of processing, N-glycosylated. Contains 8.0% of hexoses, 2.5% of hexosamines and 2.5% of sialic acids. In terms of tissue distribution, expressed by the venom gland.

The protein resides in the secreted. The catalysed reaction is Specifically activates several components of the blood clotting system, including coagulation factor X, coagulation factor IX and protein C by cleavage of Arg-|-Xaa bonds. Has no action on insulin B chain.. Its activity is regulated as follows. Calcium is required for the activity of the heterotrimer. Catalytic subunit of blood coagulation factor X-activating enzyme. Activates coagulation factor X (F10) by cleaving the Arg(234)-Ile(235) bond, activates coagulation factor IX (F9) by cleaving the Arg(226)-Val(227) bond and is also able to activate protein C (PROC). The polypeptide is Coagulation factor X-activating enzyme heavy chain (Macrovipera lebetinus (Levantine viper)).